A 206-amino-acid polypeptide reads, in one-letter code: 3-demethoxyubiquinol 3-hydroxylase (206 aa).

E55, E85, H88, E137, E169, and H172 together coordinate Fe cation.

This sequence belongs to the COQ7 family. It depends on Fe cation as a cofactor.

The protein localises to the cell membrane. It catalyses the reaction a 5-methoxy-2-methyl-3-(all-trans-polyprenyl)benzene-1,4-diol + AH2 + O2 = a 3-demethylubiquinol + A + H2O. Its pathway is cofactor biosynthesis; ubiquinone biosynthesis. In terms of biological role, catalyzes the hydroxylation of 2-nonaprenyl-3-methyl-6-methoxy-1,4-benzoquinol during ubiquinone biosynthesis. The chain is 3-demethoxyubiquinol 3-hydroxylase from Laribacter hongkongensis (strain HLHK9).